A 476-amino-acid polypeptide reads, in one-letter code: Ribulose bisphosphate carboxylase large chain (476 aa).

A propeptide spanning residues 1-2 (MS) is cleaved from the precursor. The residue at position 3 (proline 3) is an N-acetylproline. Lysine 14 carries the N6,N6,N6-trimethyllysine modification. Substrate contacts are provided by asparagine 123 and threonine 173. Catalysis depends on lysine 175, which acts as the Proton acceptor. A substrate-binding site is contributed by lysine 177. Mg(2+) is bound by residues lysine 201, aspartate 203, and glutamate 204. Lysine 201 carries the N6-carboxylysine modification. Histidine 294 acts as the Proton acceptor in catalysis. Substrate contacts are provided by arginine 295, histidine 327, and serine 379.

Belongs to the RuBisCO large chain family. Type I subfamily. In terms of assembly, heterohexadecamer of 8 large chains and 8 small chains; disulfide-linked. The disulfide link is formed within the large subunit homodimers. Requires Mg(2+) as cofactor. The disulfide bond which can form in the large chain dimeric partners within the hexadecamer appears to be associated with oxidative stress and protein turnover.

It is found in the plastid. The protein resides in the chloroplast. The enzyme catalyses 2 (2R)-3-phosphoglycerate + 2 H(+) = D-ribulose 1,5-bisphosphate + CO2 + H2O. It carries out the reaction D-ribulose 1,5-bisphosphate + O2 = 2-phosphoglycolate + (2R)-3-phosphoglycerate + 2 H(+). Functionally, ruBisCO catalyzes two reactions: the carboxylation of D-ribulose 1,5-bisphosphate, the primary event in carbon dioxide fixation, as well as the oxidative fragmentation of the pentose substrate in the photorespiration process. Both reactions occur simultaneously and in competition at the same active site. The polypeptide is Ribulose bisphosphate carboxylase large chain (Setaria italica (Foxtail millet)).